A 446-amino-acid chain; its full sequence is uncharacterized protein (446 aa).

Disordered stretches follow at residues 63-95 (KNKPHDLKNPKRSVSFKYKPNNSRSDLEESDLR) and 155-232 (AESS…HPVK). Positions 156–169 (ESSVPTPKLTNESN) are enriched in polar residues. Composition is skewed to basic and acidic residues over residues 182–199 (DQHESRTKKSMHSTDHSA) and 213–227 (ITKESELTRNDEARK).

This is an uncharacterized protein from Mus musculus (Mouse).